The primary structure comprises 289 residues: MAMAMANHHTLGLIFGILGNIISFLVYFAPAPTFYRIYKRKSAEGFHSLPYIVALFSAMLWLYYALLKKDAFLLITINSFGCAIESFYILLYFFYAPMQAKKQTLKVVISLNVGVFSILVVLIQFLLKGSNRINVFGWICASFSVAVFAAPLSIVAKVIRTKSVEFMPFSLSFFLTLSAIMWFAYGLLKNDPCVAIPNILGVILGLVQMVLYGFYRNAGKEKMEKKLPEHIIDMVMLSTLGTSDIHPIGAQQNGIKKSGSEDVKDDEETGNREKSTENSGELQPNGSTV.

Residues 1 to 10 (MAMAMANHHT) lie on the Extracellular side of the membrane. Residues 11 to 31 (LGLIFGILGNIISFLVYFAPA) traverse the membrane as a helical segment. Positions 14 to 100 (IFGILGNIIS…LYFFYAPMQA (87 aa)) constitute a MtN3/slv 1 domain. Residues 32–45 (PTFYRIYKRKSAEG) lie on the Cytoplasmic side of the membrane. A helical transmembrane segment spans residues 46–66 (FHSLPYIVALFSAMLWLYYAL). At 67–70 (LKKD) the chain is on the extracellular side. Residues 71-91 (AFLLITINSFGCAIESFYILL) form a helical membrane-spanning segment. At 92–106 (YFFYAPMQAKKQTLK) the chain is on the cytoplasmic side. Residues 107 to 127 (VVISLNVGVFSILVVLIQFLL) traverse the membrane as a helical segment. At 128 to 134 (KGSNRIN) the chain is on the extracellular side. A helical transmembrane segment spans residues 135-155 (VFGWICASFSVAVFAAPLSIV). The MtN3/slv 2 domain maps to 136-219 (FGWICASFSV…VLYGFYRNAG (84 aa)). The Cytoplasmic segment spans residues 156–167 (AKVIRTKSVEFM). Residues 168-188 (PFSLSFFLTLSAIMWFAYGLL) form a helical membrane-spanning segment. The Extracellular portion of the chain corresponds to 189–193 (KNDPC). Residues 194-214 (VAIPNILGVILGLVQMVLYGF) form a helical membrane-spanning segment. Residues 215-289 (YRNAGKEKME…GELQPNGSTV (75 aa)) are Cytoplasmic-facing. The disordered stretch occupies residues 249–289 (GAQQNGIKKSGSEDVKDDEETGNREKSTENSGELQPNGSTV). Residues 277–289 (ENSGELQPNGSTV) show a composition bias toward polar residues.

This sequence belongs to the SWEET sugar transporter family. Forms homooligomers and/or heterooligomers.

It is found in the cell membrane. Functionally, mediates both low-affinity uptake and efflux of sugar across the plasma membrane. In Vitis vinifera (Grape), this protein is Bidirectional sugar transporter SWEET15.